Here is a 644-residue protein sequence, read N- to C-terminus: Sodium/hydrogen exchanger 9 (644 aa).

Topologically, residues 1-20 (MERQRRFMSEKDEYQFQHQG) are lumenal. Residues 21–41 (AVELLVFNFLLILTILTIWLF) form a helical membrane-spanning segment. The Cytoplasmic segment spans residues 42–45 (KNHR). A helical membrane pass occupies residues 46–66 (FRFLHETGGAMVYGLIMGLIL). Over 67–126 (RYATAPTDIESGTVYDCGKLAFSPSTLLINITDQVYEYKYKREISQHNINPHLGNAILEK) the chain is Lumenal. The helical transmembrane segment at 127-147 (MTFDPEIFFNVLLPPIIFHAG) threads the bilayer. At 148 to 164 (YSLKKRHFFQNLGSILT) the chain is on the cytoplasmic side. A helical transmembrane segment spans residues 165 to 185 (YAFLGTAISCIVIGLIMYGFV). Residues 186–203 (KAMVYAGQLKNGDFHFTD) lie on the Lumenal side of the membrane. Residues 204 to 224 (CLFFGSLMSATDPVTVLAIFH) form a helical membrane-spanning segment. The Cytoplasmic segment spans residues 225–235 (ELHVDPDLYTL). A helical transmembrane segment spans residues 236 to 256 (LFGESVLNDAVAIVLTYSISI). Topologically, residues 257–277 (YSPKENPNAFDAAAFFQSVGN) are lumenal. The chain crosses the membrane as a helical span at residues 278–298 (FLGIFAGSFAMGSAYAVVTAL). The Cytoplasmic segment spans residues 299–301 (LTK). Helical transmembrane passes span 302–322 (FTKL…LSWS) and 323–343 (AFLS…FCGV). Over 344–364 (TQAHYTYNNLSLDSKMRTKQL) the chain is Cytoplasmic. A helical membrane pass occupies residues 365 to 385 (FEFMNFLAENVIFCYMGLALF). T386 is a topological domain (lumenal). Residues 387 to 407 (FQNHIFNALFILGAFLAIFVA) traverse the membrane as a helical segment. Over 408–429 (RACNIYPLSFLLNLGRKHKIPW) the chain is Cytoplasmic. Residues 430-450 (NFQHMMMFSGLRGAIAFALAI) traverse the membrane as a helical segment. Over 451–465 (RDTESQPKQMMFSTT) the chain is Lumenal. A helical membrane pass occupies residues 466–486 (LLLVFFTVWVFGGGTTPMLTW). The Cytoplasmic portion of the chain corresponds to 487–644 (LQIRVGVDLD…EQTPGQSQLN (158 aa)). A disordered region spans residues 593–622 (QAASPCSPPTRLGLDQKAAPQTPGKENIYE).

It belongs to the monovalent cation:proton antiporter 1 (CPA1) transporter (TC 2.A.36) family. In terms of assembly, homodimer; phosphatidylinositol-4,5-bisphosphate (PIP2) and phosphatidylinositol 3,4,5-trisphosphate (PIP3) could be involved in the dimer stabilization. Interacts (via the C-terminus) with RACK1. Interacts with CHP1.

Its subcellular location is the late endosome membrane. The protein resides in the early endosome membrane. It localises to the recycling endosome membrane. The protein localises to the cell membrane. It is found in the cytoplasmic vesicle. Its subcellular location is the phagosome membrane. The catalysed reaction is Na(+)(in) + H(+)(out) = Na(+)(out) + H(+)(in). It carries out the reaction K(+)(in) + H(+)(out) = K(+)(out) + H(+)(in). Endosomal Na(+), K(+)/H(+) antiporter. Mediates the electroneutral exchange of endosomal luminal H(+) for a cytosolic Na(+) or K(+). By facilitating proton efflux, SLC9A9 counteracts the acidity generated by vacuolar (V)-ATPase, thereby limiting luminal acidification. Regulates organellar pH and consequently, endosome maturation and endocytic trafficking of plasma membrane receptors and neurotransporters. Promotes the recycling of transferrin receptors back to the cell surface to facilitate additional iron uptake in the brain. Regulates synaptic transmission by regulating the luminal pH of axonal endosomes. Regulates phagosome lumenal pH, thus affecting phagosome maturation, and consequently, microbicidal activity in macrophages. Can also be active at the cell surface of specialized cells, e.g., in the inner ear hair bundles uses the high K(+) of the endolymph to regulate intracelular pH. The sequence is that of Sodium/hydrogen exchanger 9 (SLC9A9) from Equus caballus (Horse).